Consider the following 217-residue polypeptide: GRB2-related adapter protein (217 aa).

The SH3 1 domain occupies 1 to 58 (MESVALYSFQATESDELAFNKGDTLKILNMEDDQNWYKAELRGAEGFVPKNYIRLKPH). An SH2 domain is found at 60–152 (WYSGRISRQL…KRQVFLQDEE (93 aa)). The region spanning 158 to 217 (PRACFAQAQFDFSAQDPSQLSFRRGDIIEVLERLDPSWWRGRLSGRIGFFPRSYVQPVHM) is the SH3 2 domain.

This sequence belongs to the GRB2/sem-5/DRK family. In terms of assembly, associates through its SH2 domain with ligand-activated receptors for stem cell factor (KIT) and erythropoietin (EPOR). Also forms a stable complex with the Bcr-Abl oncoprotein. GRAP is associated with the Ras guanine nucleotide exchange factor SOS1, primarily through its N-terminal SH3 domain. Interacts with phosphorylated LAT upon TCR activation. Interacts with SHB.

It is found in the membrane. It localises to the synapse. In terms of biological role, couples signals from receptor and cytoplasmic tyrosine kinases to the Ras signaling pathway. Plays a role in the inner ear and in hearing. In Bos taurus (Bovine), this protein is GRB2-related adapter protein (GRAP).